We begin with the raw amino-acid sequence, 545 residues long: Methionine--tRNA ligase (545 aa).

Positions 15 to 25 (PYANGPIHIGH) match the 'HIGH' region motif. Zn(2+) contacts are provided by Cys146, Cys149, Cys159, and Cys162. The 'KMSKS' region signature appears at 332-336 (KLSKS). Lys335 serves as a coordination point for ATP.

Belongs to the class-I aminoacyl-tRNA synthetase family. MetG type 1 subfamily. As to quaternary structure, monomer. Requires Zn(2+) as cofactor.

It is found in the cytoplasm. It catalyses the reaction tRNA(Met) + L-methionine + ATP = L-methionyl-tRNA(Met) + AMP + diphosphate. Functionally, is required not only for elongation of protein synthesis but also for the initiation of all mRNA translation through initiator tRNA(fMet) aminoacylation. The protein is Methionine--tRNA ligase (metG) of Buchnera aphidicola subsp. Schizaphis graminum (strain Sg).